Here is a 360-residue protein sequence, read N- to C-terminus: MSILRAKTSGAQQHEEFRMAFKLSYITGRQDNNVLEVTLAAGQNAVVHATVKNTGTEALNLLKYGTLFDSAPVQKVDVYEGENAVPFKGILRSIQRTDLAPEVFHTLAAGETFETTFNAAEVHDLSSTNYTFIAEGTIPVAPVGSTKISDTIFFKSNTLTIPVDGAAAQSMAKAIPASIDRRTILQSGCSTTQKTQTTQALSYCAQLARAASTAASSGSATKFSEYFKTTAAATRSVVAARLSAVASQCSSLTSGSTTYYCTDIYNYCSSNVLAYTIPSTNEIVNCPLYYSALPTLSGTCHAQDRATTSLHEFTHAPATYSPGTADNGYGYSAAVALTSAKAVLNADSYALYANAIYVGC.

A glycan (N-linked (GlcNAc...) asparagine) is linked at N129. 2 cysteine pairs are disulfide-bonded: C189/C261 and C268/C286. H311 is a Zn(2+) binding site. Residue E312 is part of the active site. The Zn(2+) site is built by H315 and D326.

It belongs to the peptidase M35 family. Requires Zn(2+) as cofactor.

The protein localises to the secreted. It carries out the reaction Preferential cleavage of bonds with hydrophobic residues in P1'. Also 3-Asn-|-Gln-4 and 8-Gly-|-Ser-9 bonds in insulin B chain.. Secreted metalloproteinase that allows assimilation of proteinaceous substrates. Shows high activities on basic nuclear substrates such as histone and protamine. This Sclerotinia sclerotiorum (strain ATCC 18683 / 1980 / Ss-1) (White mold) protein is Neutral protease 2 homolog SS1G_13741.